The primary structure comprises 288 residues: 4-diphosphocytidyl-2-C-methyl-D-erythritol kinase (288 aa).

Lys-11 is an active-site residue. 100–110 provides a ligand contact to ATP; that stretch reads PIAAGLGSGSS. Asp-140 is a catalytic residue.

It belongs to the GHMP kinase family. IspE subfamily.

It carries out the reaction 4-CDP-2-C-methyl-D-erythritol + ATP = 4-CDP-2-C-methyl-D-erythritol 2-phosphate + ADP + H(+). It functions in the pathway isoprenoid biosynthesis; isopentenyl diphosphate biosynthesis via DXP pathway; isopentenyl diphosphate from 1-deoxy-D-xylulose 5-phosphate: step 3/6. Its function is as follows. Catalyzes the phosphorylation of the position 2 hydroxy group of 4-diphosphocytidyl-2C-methyl-D-erythritol. The chain is 4-diphosphocytidyl-2-C-methyl-D-erythritol kinase from Wolbachia sp. subsp. Drosophila simulans (strain wRi).